A 128-amino-acid chain; its full sequence is Probable 4-amino-4-deoxy-L-arabinose-phosphoundecaprenol flippase subunit ArnF (128 aa).

Over 1–2 (MG) the chain is Cytoplasmic. Residues 3–23 (LIWGLFSVIIASVAQLSLGFA) form a helical membrane-spanning segment. At 24–35 (ASHLPPMTHLWD) the chain is on the periplasmic side. Residues 36-56 (FIAALLAFGLDARILLLGLLG) traverse the membrane as a helical segment. The Cytoplasmic segment spans residues 57 to 76 (YLLSVFCWYKTLHKLALSKA). The helical transmembrane segment at 77 to 97 (YALLSMSYVLVWIASMVLPGW) threads the bilayer. Residues 98 to 100 (EGT) are Periplasmic-facing. Residues 101-121 (FSLKALLGVACIMSGLMLIFL) form a helical membrane-spanning segment. At 122–128 (PTTKQRY) the chain is on the cytoplasmic side.

It belongs to the ArnF family. Heterodimer of ArnE and ArnF.

The protein resides in the cell inner membrane. The protein operates within bacterial outer membrane biogenesis; lipopolysaccharide biosynthesis. Its function is as follows. Translocates 4-amino-4-deoxy-L-arabinose-phosphoundecaprenol (alpha-L-Ara4N-phosphoundecaprenol) from the cytoplasmic to the periplasmic side of the inner membrane. This Shigella boydii serotype 4 (strain Sb227) protein is Probable 4-amino-4-deoxy-L-arabinose-phosphoundecaprenol flippase subunit ArnF.